Consider the following 349-residue polypeptide: Flap endonuclease 1 (349 aa).

The interval 1 to 102 is N-domain; it reads MGVTELGKLI…AEIEARRRVK (102 aa). Positions 31, 84, 156, 158, 177, 179, and 239 each coordinate Mg(2+). Residues 120–261 are I-domain; sequence DVAKYMKRVI…KALKLVLEFG (142 aa).

This sequence belongs to the XPG/RAD2 endonuclease family. FEN1 subfamily. In terms of assembly, interacts with PCNA. PCNA stimulates the nuclease activity without altering cleavage specificity. The cofactor is Mg(2+).

Functionally, structure-specific nuclease with 5'-flap endonuclease and 5'-3' exonuclease activities involved in DNA replication and repair. During DNA replication, cleaves the 5'-overhanging flap structure that is generated by displacement synthesis when DNA polymerase encounters the 5'-end of a downstream Okazaki fragment. Binds the unpaired 3'-DNA end and kinks the DNA to facilitate 5' cleavage specificity. Cleaves one nucleotide into the double-stranded DNA from the junction in flap DNA, leaving a nick for ligation. Also involved in the base excision repair (BER) pathway. Acts as a genome stabilization factor that prevents flaps from equilibrating into structures that lead to duplications and deletions. Also possesses 5'-3' exonuclease activity on nicked or gapped double-stranded DNA. The chain is Flap endonuclease 1 from Pyrobaculum neutrophilum (strain DSM 2338 / JCM 9278 / NBRC 100436 / V24Sta) (Thermoproteus neutrophilus).